Consider the following 503-residue polypeptide: Mitogen-activated protein kinase kinae mkk2 (503 aa).

The disordered stretch occupies residues 1 to 130 (MSSSPVPLLR…ASGPASASSS (130 aa)). Residues 53-66 (APQPQRPSTRPAPP) show a composition bias toward pro residues. The segment covering 100 to 115 (TGLNESTGHSRSSSFT) has biased composition (polar residues). Over residues 121–130 (ASGPASASSS) the composition is skewed to low complexity. The region spanning 211 to 481 (IIELGSLGEG…PWRMLEHPWM (271 aa)) is the Protein kinase domain. Residues 217–225 (LGEGAGGAV) and Lys240 contribute to the ATP site. Asp338 serves as the catalytic Proton acceptor.

This sequence belongs to the protein kinase superfamily. STE Ser/Thr protein kinase family. MAP kinase kinase subfamily.

The catalysed reaction is L-seryl-[protein] + ATP = O-phospho-L-seryl-[protein] + ADP + H(+). It catalyses the reaction L-threonyl-[protein] + ATP = O-phospho-L-threonyl-[protein] + ADP + H(+). Mitogen-activated kinase kinase (MAPKK), part of the cell wall integrity (CWI) signaling pathway composed by three protein kinases bck1, mkk2 and mpkA and responsible for the maintaining of cell-wall integrity balance. The CWI pathway also regulates the oxidative stress response, as well as the production of some secondary metabolites including pyomelanin. This is Mitogen-activated protein kinase kinae mkk2 from Aspergillus fumigatus (strain CBS 144.89 / FGSC A1163 / CEA10) (Neosartorya fumigata).